A 268-amino-acid chain; its full sequence is Phosphatidylglycerol--prolipoprotein diacylglyceryl transferase (268 aa).

7 consecutive transmembrane segments (helical) span residues 21–41 (WYGIIIVSAIALSIWLGGRFA), 54–74 (FAIILVPAGILGARLYEVFVL), 93–113 (GLAIHGAVLGGAIAAAIYLPM), 122–142 (ADVVGLVLPLAQAIGRWGNFF), 173–193 (VMHPTFLYESVWNLLTFGILL), 203–223 (GVVFSLYLVLYNAGRFLIESI), and 236–256 (VAQLVAAVLAILGLVLLAWFL). Arg137 is a binding site for a 1,2-diacyl-sn-glycero-3-phospho-(1'-sn-glycerol).

This sequence belongs to the Lgt family.

The protein resides in the cell membrane. It catalyses the reaction L-cysteinyl-[prolipoprotein] + a 1,2-diacyl-sn-glycero-3-phospho-(1'-sn-glycerol) = an S-1,2-diacyl-sn-glyceryl-L-cysteinyl-[prolipoprotein] + sn-glycerol 1-phosphate + H(+). The protein operates within protein modification; lipoprotein biosynthesis (diacylglyceryl transfer). Functionally, catalyzes the transfer of the diacylglyceryl group from phosphatidylglycerol to the sulfhydryl group of the N-terminal cysteine of a prolipoprotein, the first step in the formation of mature lipoproteins. This Symbiobacterium thermophilum (strain DSM 24528 / JCM 14929 / IAM 14863 / T) protein is Phosphatidylglycerol--prolipoprotein diacylglyceryl transferase.